The sequence spans 166 residues: Phosphopantetheine adenylyltransferase (166 aa).

S9 contacts substrate. Residues S9–F10 and H17 contribute to the ATP site. K41, L74, and K88 together coordinate substrate. ATP is bound by residues G89–R91, E99, and Y123–T129.

Belongs to the bacterial CoaD family. In terms of assembly, homohexamer. Mg(2+) serves as cofactor.

It localises to the cytoplasm. The catalysed reaction is (R)-4'-phosphopantetheine + ATP + H(+) = 3'-dephospho-CoA + diphosphate. Its pathway is cofactor biosynthesis; coenzyme A biosynthesis; CoA from (R)-pantothenate: step 4/5. Its function is as follows. Reversibly transfers an adenylyl group from ATP to 4'-phosphopantetheine, yielding dephospho-CoA (dPCoA) and pyrophosphate. The chain is Phosphopantetheine adenylyltransferase from Pseudarthrobacter chlorophenolicus (strain ATCC 700700 / DSM 12829 / CIP 107037 / JCM 12360 / KCTC 9906 / NCIMB 13794 / A6) (Arthrobacter chlorophenolicus).